The chain runs to 496 residues: MLHTEGHALLRAVGQGKLRLARLLLEGGAYVNEGDAQGETALMAACRARYDDPQNKARMVRYLLEQGADPNIADRLGRTALMHACAGGGGAAVASLLLAHGADPSVRDHAGASALVHALDRGDRETLATLLDACKAKGTEVIIITTDTSPSGTKKTRQYLNSPPSPGVEDPAPASPSPGFCTSPSEIQLQTAGGGGRGMLSPRAQEEEEKRDVFEFPLPKPPDDPSPSEPLPKPPRHPPKPLKRLNSEPWGLVAPPQPVPPTEGRPGIERLTAEFNGLTLTGRPRLSRRHSTEGPEDPPPWAEKVTSGGPLSRRNTAPEAQESGPPSGLRQKLSRMEPVELDTPGHLCPDSPESSRLSLERRRYSASPLTLPPAGSAPSPRQSQESLPGAVSPLSGRRRSPGLLERRGSGTLLLDHISQTRPGFLPPLNVSPHPPIPDIRPQPGGRAPSLPAPPYAGAPGSPRTKRKLVRRHSMQTEQIRLLGGFQSLGGPGEPGR.

ANK repeat units lie at residues 4-33 (TEGHALLRAVGQGKLRLARLLLEGGAYVNE), 37-72 (QGETALMAACRARYDDPQNKARMVRYLLEQGADPNI), 76-106 (LGRTALMHACAGGGGAAVASLLLAHGADPSV), and 110-139 (AGASALVHALDRGDRETLATLLDACKAKGT). Residue glutamine 15 is modified to N5-methylglutamine. Polar residues-rich tracts occupy residues 147-162 (DTSPSGTKKTRQYLNS) and 180-191 (FCTSPSEIQLQT). The interval 147–473 (DTSPSGTKKT…TKRKLVRRHS (327 aa)) is disordered. The span at 204–214 (AQEEEEKRDVF) shows a compositional bias: basic and acidic residues. A compositionally biased stretch (pro residues) spans 218 to 233 (LPKPPDDPSPSEPLPK). Residues 234-243 (PPRHPPKPLK) show a composition bias toward basic residues. Position 316 is a phosphothreonine (threonine 316). Residues 463–473 (RTKRKLVRRHS) are compositionally biased toward basic residues.

It belongs to the ANKRD34 family. Methylated at Gln-15 by N6AMT1.

This Homo sapiens (Human) protein is Ankyrin repeat domain-containing protein 34A (ANKRD34A).